We begin with the raw amino-acid sequence, 185 residues long: MGKVLVIYDTRTGNTKKMAELVAEGARSLEGTEVRLKHVDEATKEDVLWADGLAVGSPTNMGLVSWKMKRFFDDVLGDLWGEIDGKIACAFSSSGGWGGGNEVACMSILTMLMNFGFLVFGVTDYVGKKFTLHYGAVVAGEPRSEEEKEACRRLGRRLAEWVAIFVDGRKELLEKIRKDPARFVD.

Residues 4–159 (VLVIYDTRTG…ACRRLGRRLA (156 aa)) form the Flavodoxin-like domain.

It belongs to the flavodoxin family. It depends on FMN as a cofactor.

Low-potential electron donor to a number of redox enzymes. This is Flavodoxin (fldA) from Aquifex aeolicus (strain VF5).